A 142-amino-acid chain; its full sequence is Large ribosomal subunit protein uL13 (142 aa).

This sequence belongs to the universal ribosomal protein uL13 family. In terms of assembly, part of the 50S ribosomal subunit.

In terms of biological role, this protein is one of the early assembly proteins of the 50S ribosomal subunit, although it is not seen to bind rRNA by itself. It is important during the early stages of 50S assembly. This chain is Large ribosomal subunit protein uL13, found in Pelobacter propionicus (strain DSM 2379 / NBRC 103807 / OttBd1).